Consider the following 487-residue polypeptide: Arginine ADP-riboxanase OspC3 (487 aa).

The segment covering 1–14 (MRVETHSPSFTNPN) has biased composition (polar residues). Residues 1 to 41 (MRVETHSPSFTNPNPAEACSGDPTEMGSRLSGVSRAPLPHA) are disordered. H137, Q138, S139, S164, N167, and T168 together coordinate NAD(+). E325 is a catalytic residue. ANK repeat units follow at residues 368 to 398 (DAVT…EAKD) and 444 to 473 (RGDT…DRNL).

It belongs to the OspC family.

The protein resides in the secreted. It is found in the host cytoplasm. It catalyses the reaction L-arginyl-[protein] + NAD(+) = ADP-riboxanated L-argininyl-[protein] + nicotinamide + NH4(+) + H(+). Its function is as follows. ADP-riboxanase effector that inhibits host cell pyroptosis. Acts by mediating arginine ADP-riboxanation of host CASP4/CASP11, blocking CASP4/CASP11 autoprocessing. This prevents CASP4 activation and ability to recognize and cleave GSDMD, thereby inhibiting LPS-induced pyroptosis. ADP-riboxanation takes place in two steps: OspC3 first catalyzes ADP-ribosylation of target Arg, and then initiates a deamination to remove one N-omega group. The chain is Arginine ADP-riboxanase OspC3 from Chromobacterium sp. (strain ATCC 53434 / SC 14030).